A 632-amino-acid polypeptide reads, in one-letter code: METAVAAAPAWGFFSSFLLLAFGTLVAALLGAAHRLGLFYQLMHKVDTASTRHGGENVAAVLKAHGVRFLFTLVGGHISPLLVACEKLGIRVVDTRHEVTAVFAADAVARLTGTVGVAAVTAGPGLTNTVTAVKNAQIAQSPVLLLGGAASTLLQNRGALQAIDQIALFRPLCKFCASVRRVRDIIPTLRAAMAAAQSGTPGPVFVELPLDVLYPYFMVQKEMVPAKPPKGLMSRAVHWYLANSLANLFAGAWEPQPEGPLPLDIPQASPQQVQRCVEILSRAKKPLMLIGSQALLPPTSSDKLRVAVETLGIPCFLAGMARGLLGRNHPLHFRQNRRAALKKADVVVLAGAVCDFRLSYGRVLSRSSKIIVVNRDRKEMLINSDIFWKPQEAVQGDVGSFVVKLVEGLRGQMWASDWAEELRQADQQKEQAFREKALMPVAQHLNPVRVLQLVEDTLPDNSILVVDGGDFVGTAAYLVQPRGPLRWLDPGAFGTLGVGAGFALGAKLCRPDAEVWCLFGDGAFGYSLIEFDTFVRHKIPVMALIGNDAGWTQISREQVPSLGSNVACGLAYTDYHKAAQGLGAQGLLLSRENEDQVVKVLRDAQQWCQDGHPVVVNILIGRTDFRDGSIAM.

Residues 10–30 form a helical membrane-spanning segment; that stretch reads AWGFFSSFLLLAFGTLVAALL. Glu-98 contributes to the thiamine diphosphate binding site. The tract at residues 470-550 is thiamine pyrophosphate binding; that stretch reads DFVGTAAYLV…VMALIGNDAG (81 aa). Residues Asp-521 and Asn-547 each coordinate Mg(2+).

The protein belongs to the TPP enzyme family. Requires Mg(2+) as cofactor. Thiamine diphosphate serves as cofactor.

It localises to the endoplasmic reticulum membrane. It catalyses the reaction 2-hydroxyoctadecanoyl-CoA = heptadecanal + formyl-CoA. The catalysed reaction is (2R)-hydroxyhexadecanoyl-CoA = pentadecanal + formyl-CoA. In terms of biological role, endoplasmic reticulum 2-OH acyl-CoA lyase involved in the cleavage (C1 removal) reaction in the fatty acid alpha-oxydation in a thiamine pyrophosphate (TPP)-dependent manner. Involved in the phytosphingosine degradation pathway. The sequence is that of 2-hydroxyacyl-CoA lyase 2 (ILVBL) from Bos taurus (Bovine).